Consider the following 382-residue polypeptide: 2-heptyl-3-hydroxy-4(1H)-quinolone synthase (382 aa).

It belongs to the 3-hydroxybenzoate 6-hydroxylase family.

It carries out the reaction 2-heptyl-4(1H)-quinolone + NADH + O2 + H(+) = 2-heptyl-3-hydroxy-4(1H)-quinolone + NAD(+) + H2O. Its function is as follows. Involved in the terminal step of the biosynthesis of quinolone which in addition to serve as a potent signal for quorum sensing, chelates iron and promotes the formation of membrane vesicles (MVs). Catalyzes the hydroxylation of 2-heptyl-4-quinolone (C7-HHQ) to yield 2-heptyl-3-hydroxy-4-quinolone (PQS). This chain is 2-heptyl-3-hydroxy-4(1H)-quinolone synthase (pqsH), found in Pseudomonas aeruginosa (strain ATCC 15692 / DSM 22644 / CIP 104116 / JCM 14847 / LMG 12228 / 1C / PRS 101 / PAO1).